Reading from the N-terminus, the 279-residue chain is Presqualene diphosphate synthase (279 aa).

The protein belongs to the phytoene/squalene synthase family. HpnD subfamily.

The catalysed reaction is 2 (2E,6E)-farnesyl diphosphate = presqualene diphosphate + diphosphate. Its pathway is secondary metabolite biosynthesis; hopanoid biosynthesis. Functionally, involved in the biosynthesis of the hopanoid precursor squalene (SQ) from farnesyl diphosphate (FPP). Catalyzes the first step, the formation of presqualene diphosphate (PSPP) from two molecules of FPP. This chain is Presqualene diphosphate synthase, found in Sinorhizobium fredii (strain NBRC 101917 / NGR234).